The primary structure comprises 675 residues: MAEMVAEAAEIPTQSSGAVEISTAVSGELAEMATAVTEMTSGEALASSLFFQHHQFMCSECGSLYNTLEEVLSHQEQHLLTMSEEETLTTQDAGLEPELVPSTGEGPFQCGECSQLILSPSELLAHQDAHLQESASQIQYQCGDCQELFPSPELWVAHRKTQHLSSAADEPPSPLPPPTPPPPPPPPPPPPPPEVKMEPYECPECSTLCATPEEFLEHQGTHFDSLEKEEHNGLEEEEEDEEEGEEEEDDDDEETDEEEASSELTADDTGSNKSTADSAQSCGDCPQHCTSSGARHKHRRASHGPASATHAFHCSQCQRSFSSANRLVAHGRAHVGGTHECTTCSKVFKKAASLEQHQRLHRGEARYLCVDCGRGFGTELTLVAHRRAHTANPLHRCRCGKTFSNMTKFLYHRRTHTGKSGTPTRVATVSPAPAEPTPPPLPPPAQLPCPQCPKSFASASRLSRHRRAVHGPPERRHRCGVCGKGFKKLVHVRNHLRTHTGERPFQCHSCGKTFASLANLSRHQLTHTGVRPYQCLDCGKRFTQSSNLQQHRRLHLRPVAFARAPRLPITGLYNKSPYYCGTCGRWFRAMAGLRLHQRVHARARSLTLQPPRSPSPVPPPPPEPQQTIMCTELGETIAIIETSQPLALEDTLQLCQAALGASEASGLLQLDTAFV.

C2H2-type zinc fingers lie at residues Phe-56 to His-78, Phe-108 to His-130, and Tyr-140 to His-163. The disordered stretch occupies residues Lys-160–Val-195. Residues Pro-171–Glu-194 are compositionally biased toward pro residues. Residues Tyr-200–His-222 form a C2H2-type 4 zinc finger. Basic and acidic residues predominate over residues Ser-225 to Leu-234. The tract at residues Ser-225–Gly-283 is disordered. Positions Glu-235 to Ser-261 are enriched in acidic residues. Residues Thr-269 to Ser-281 are compositionally biased toward polar residues. C2H2-type zinc fingers lie at residues Phe-312–His-334, His-339–His-361, Tyr-367–His-389, and His-395–His-416. The interval Thr-415–Pro-439 is disordered. A compositionally biased stretch (polar residues) spans Gly-418–Ala-427. 5 C2H2-type zinc fingers span residues Leu-447–His-470, His-477–His-499, Phe-505–His-527, Tyr-533–His-555, and Tyr-578–His-600. The interval Leu-606–Gln-625 is disordered. Pro residues predominate over residues Pro-611 to Pro-624.

The protein belongs to the krueppel C2H2-type zinc-finger protein family.

The protein resides in the nucleus. May be involved in transcriptional regulation. In Mus musculus (Mouse), this protein is Zinc finger protein 526 (Znf526).